The sequence spans 505 residues: Holliday junction branch migration ATPase PINA (505 aa).

In terms of domain architecture, PINc spans 2–106 (NDLMLDKSAL…IVTADETQKK (105 aa)). A KH domain region spans residues 434 to 505 (PVNRGITMSN…NIKIKIKLSD (72 aa)). The required for maximum interaction with Hjc and Hjm stretch occupies residues 493–505 (KKNNIKIKIKLSD).

Homohexamer; the central pore (25-31 Angstroms) is large enough to hold dsDNA. In PDB:5F4H two of the 6 subunits are in an ATP-binding competent conformation. Interacts with Holliday junction resolvase Hjc; in the presence of HJ DNA this interaction decreases branch migration but not Y-DNA unwinding. Interacts with helicase Hjm (hel308) which decreases the DNA helicase activity of Hjm. Requires Ca(2+) as cofactor.

It catalyses the reaction ATP + H2O = ADP + phosphate + H(+). Its function is as follows. Promotes Holliday junction (HJ) branch migration and unwinds Y-shaped DNA (but not replication forks or dsDNA) in an ATP hydrolysis-dependent manner. Stimulates cleavage by HJ resolvase Hjc. Unwinds Y-shaped and 3'-flap DNA substrates. In the absence of other proteins stabilizes replication forks (prevents spontaneous unwinding); Hjc, Hjm (Hel308) and PINA coordinate HJ migration and cleavage of replication forks in a coordinated way. Inhibits the 5'-3' (but not 3'-5') helicase activity of helicase Hjm (Hel308) on overhang DNA. Probably acts as an ATP-dependent pump that pulls DNA through the hexamer. The protein is Holliday junction branch migration ATPase PINA of Saccharolobus islandicus (strain REY15A) (Sulfolobus islandicus).